A 227-amino-acid polypeptide reads, in one-letter code: PKHD-type hydroxylase ACIAD0531 (227 aa).

In terms of domain architecture, Fe2OG dioxygenase spans 78–178; that stretch reads HIIPPLFNRY…RFASFFWVQS (101 aa). Fe cation-binding residues include His-96, Asp-98, and His-159. Arg-169 provides a ligand contact to 2-oxoglutarate.

Fe(2+) is required as a cofactor. Requires L-ascorbate as cofactor.

The chain is PKHD-type hydroxylase ACIAD0531 from Acinetobacter baylyi (strain ATCC 33305 / BD413 / ADP1).